We begin with the raw amino-acid sequence, 530 residues long: MEDDSLYLGGDWQFNHFSKLTSSRLDAAFAEIQRTSLSEKSPLSSETRFDLCDDLAPVARQLAPREKLPLSSRRPAAVGAGLQKIGNTFYVNVSLQCLTYTLPLSNYMLSREDSQTCHLHKCCMFCTMQAHITWALHSPGHVIQPSQVLAAGFHRGEQEDAHEFLMFTVDAMKKACLPGHKQLDHHSKDTTLIHQIFGAYWRSQIKYLHCHGVSDTFDPYLDIALDIQAAQSVKQALEQLVKPKELNGENAYHCGLCLQKAPASKTLTLPTSAKVLILVLKRFSDVTGNKLAKNVQYPKCRDMQPYMSQQNTGPLVYVLYAVLVHAGWSCHNGHYFSYVKAQEGQWYKMDDAEVTASGITSVLSQQAYVLFYIQKSEWERHSESVSRGREPRALGAEDTDRPATQGELKRDHPCLQVPELDEHLVERATQESTLDHWKFPQEQNKTKPEFNVRKVEGTLPPNVLVIHQSKYKCGMKNHHPEQQSSLLNLSSTKPTDQESMNTGTLASLQGSTRRSKGNNKHSKRSLLVCQ.

In terms of domain architecture, USP spans 80–375 (AGLQKIGNTF…QAYVLFYIQK (296 aa)). Residues 382–392 (SESVSRGREPR) show a composition bias toward basic and acidic residues. Disordered stretches follow at residues 382–412 (SESV…KRDH), 431–454 (ESTL…NVRK), and 490–530 (SSTK…LVCQ). The span at 490 to 512 (SSTKPTDQESMNTGTLASLQGST) shows a compositional bias: polar residues. A compositionally biased stretch (basic residues) spans 513–524 (RRSKGNNKHSKR).

It belongs to the peptidase C19 family. USP17 subfamily.

The protein localises to the nucleus. Its subcellular location is the endoplasmic reticulum. The polypeptide is Inactive ubiquitin carboxyl-terminal hydrolase 17-like protein 7 (USP17L7) (Homo sapiens (Human)).